The sequence spans 109 residues: LSM2-LSM8 complex subunit LSM8 (109 aa).

The Sm domain maps to 1–70 (MSATLKDYLN…IALVGLIDAE (70 aa)).

This sequence belongs to the snRNP Sm proteins family. Component of the heptameric LSM2-LSM8 complex that forms a seven-membered ring structure with a donut shape; an RNA strand can pass through the hole in the center of the ring structure. The LSm subunits are arranged in the order LSM8, LSM2, LSM3, LSM6, LSM5, LSM7 and LSM4. Component of the spliceosome U4/U6-U5 tri-snRNP complex composed of the U4, U6 and U5 snRNAs and at least PRP3, PRP4, PRP6, PRP8, PRP18, PRP31, PRP38, SNU13, SNU23, SNU66, SNU114, SPP381, SMB1, SMD1, SMD2, SMD3, SMX2, SMX3, LSM2, LSM3, LSM4, LSM5, LSM6, LSM7, LSM8, BRR2 and DIB1.

It localises to the nucleus. The protein localises to the cytoplasm. Component of the nuclear LSM2-LSM8 complex, which is involved in spliceosome assembly. The LSM2-LSM8 complex plays a role in the biogenesis of the spliceosomal U4/U6-U5 tri-snRNP complex by accelerating PRP24-mediated annealing of U4/U6 di-snRNA. The LSM2-LSM8 complex binds U6 snRNA terminating with a non-cyclic 3' phosphate group. LSM2-LSM8 is probably also involved in degradation of nuclear pre-mRNA by targeting them for decapping. LSM2-LSM8 could be involved in processing of pre-tRNAs, pre-rRNAs and U3 snoRNA, although involvement may be indirect. This is LSM2-LSM8 complex subunit LSM8 (LSM8) from Saccharomyces cerevisiae (strain ATCC 204508 / S288c) (Baker's yeast).